The sequence spans 419 residues: MLEHLRATDPIIADLIEREAQRQRQGLELIASENYTSLAVMEAQGSVLTNKYAEGLPGRRYYGGCEFVDAIEQLAIERACQLFGTSHANVQPHSGAQANIAVFTALLQPGDTILGMRLDHGGHLTHGSPVNFSGKWYNVHFYGVDAQTGQIDYDDLASKARAIRPKLITSGASAYPRIIDFARMRQIADEVGALLMADIAHIAGLVAAGEHPSPVGHAHVITTTTHKTLRGPRGGLILMGDDFAKQLNSSVFPGTQGGPLMHVIAGKAVAFGEALRPEFRQYAAQIRRNARALAEGLMAQGLTLVSGGTDNHLMLVDLRSTGLTGAQAQRALDKAAITVNKNAIPDDPQPPMKTSGIRIGTPAVTTRGMREPEMAQIAAWIGEVLMYPDDEARLNRIAGEVADLCRHFPVPADMVQVRG.

Residues L118 and 122–124 each bind (6S)-5,6,7,8-tetrahydrofolate; that span reads GHL. K227 is subject to N6-(pyridoxal phosphate)lysine.

It belongs to the SHMT family. Homodimer. The cofactor is pyridoxal 5'-phosphate.

It localises to the cytoplasm. It carries out the reaction (6R)-5,10-methylene-5,6,7,8-tetrahydrofolate + glycine + H2O = (6S)-5,6,7,8-tetrahydrofolate + L-serine. It participates in one-carbon metabolism; tetrahydrofolate interconversion. Its pathway is amino-acid biosynthesis; glycine biosynthesis; glycine from L-serine: step 1/1. In terms of biological role, catalyzes the reversible interconversion of serine and glycine with tetrahydrofolate (THF) serving as the one-carbon carrier. This reaction serves as the major source of one-carbon groups required for the biosynthesis of purines, thymidylate, methionine, and other important biomolecules. Also exhibits THF-independent aldolase activity toward beta-hydroxyamino acids, producing glycine and aldehydes, via a retro-aldol mechanism. The polypeptide is Serine hydroxymethyltransferase (Chloroflexus aurantiacus (strain ATCC 29364 / DSM 637 / Y-400-fl)).